A 131-amino-acid chain; its full sequence is Pancreatic polypeptide prohormone (131 aa).

An N-terminal signal peptide occupies residues 1 to 29 (MAAAHRCLFLLLLSTCVALLLQPPLGALG). Position 65 is a tyrosine amide (Tyr65).

The protein belongs to the NPY family.

It is found in the secreted. Functionally, hormone secreted by pancreatic cells that acts as a regulator of pancreatic and gastrointestinal functions probably by signaling through the G protein-coupled receptor NPY4R2. This Bos taurus (Bovine) protein is Pancreatic polypeptide prohormone (PPY).